Here is a 589-residue protein sequence, read N- to C-terminus: Poly(3-hydroxyalkanoate) polymerase subunit PhaC (589 aa).

A disordered region spans residues 1–23 (MATGKGAAASTQEGKSQPFKVTP). C319 is a catalytic residue.

The protein belongs to the PHA/PHB synthase family. Type I PhaC subfamily. In terms of assembly, monomer.

The protein resides in the cytoplasm. It carries out the reaction (3R)-3-hydroxybutanoyl-CoA + [(3R)-hydroxybutanoate](n) = [(3R)-hydroxybutanoate](n+1) + CoA. Its pathway is biopolymer metabolism; poly-(R)-3-hydroxybutanoate biosynthesis. In terms of biological role, polymerizes (R)-3-hydroxybutyryl-CoA to create polyhydroxybutyrate (PHB) which consists of thousands of hydroxybutyrate molecules linked end to end. PHB serves as an intracellular energy reserve material when cells grow under conditions of nutrient limitation. In Cupriavidus necator (strain ATCC 17699 / DSM 428 / KCTC 22496 / NCIMB 10442 / H16 / Stanier 337) (Ralstonia eutropha), this protein is Poly(3-hydroxyalkanoate) polymerase subunit PhaC.